The chain runs to 295 residues: Fructose-bisphosphate aldolase class 1 (295 aa).

The active-site Proton acceptor is Glu176. Catalysis depends on Lys213, which acts as the Schiff-base intermediate with dihydroxyacetone-P.

This sequence belongs to the class I fructose-bisphosphate aldolase family.

The catalysed reaction is beta-D-fructose 1,6-bisphosphate = D-glyceraldehyde 3-phosphate + dihydroxyacetone phosphate. The protein operates within carbohydrate degradation; glycolysis; D-glyceraldehyde 3-phosphate and glycerone phosphate from D-glucose: step 4/4. In Treponema denticola (strain ATCC 35405 / DSM 14222 / CIP 103919 / JCM 8153 / KCTC 15104), this protein is Fructose-bisphosphate aldolase class 1.